We begin with the raw amino-acid sequence, 192 residues long: Xanthine phosphoribosyltransferase (192 aa).

2 residues coordinate xanthine: leucine 20 and asparagine 27. 128–132 contributes to the 5-phospho-alpha-D-ribose 1-diphosphate binding site; that stretch reads ANGDA. Lysine 156 is a binding site for xanthine.

The protein belongs to the purine/pyrimidine phosphoribosyltransferase family. Xpt subfamily. In terms of assembly, homodimer.

It is found in the cytoplasm. The enzyme catalyses XMP + diphosphate = xanthine + 5-phospho-alpha-D-ribose 1-diphosphate. The protein operates within purine metabolism; XMP biosynthesis via salvage pathway; XMP from xanthine: step 1/1. Its function is as follows. Converts the preformed base xanthine, a product of nucleic acid breakdown, to xanthosine 5'-monophosphate (XMP), so it can be reused for RNA or DNA synthesis. This Staphylococcus aureus (strain MRSA252) protein is Xanthine phosphoribosyltransferase.